Reading from the N-terminus, the 341-residue chain is Glycerol-3-phosphate dehydrogenase [NAD(P)+] (341 aa).

The NADPH site is built by serine 14, phenylalanine 15, arginine 35, and lysine 108. Sn-glycerol 3-phosphate is bound by residues lysine 108 and glycine 136. Alanine 140 provides a ligand contact to NADPH. Sn-glycerol 3-phosphate contacts are provided by lysine 191, aspartate 244, serine 254, arginine 255, and asparagine 256. Residue lysine 191 is the Proton acceptor of the active site. Arginine 255 lines the NADPH pocket. NADPH is bound by residues valine 279 and glutamate 281.

It belongs to the NAD-dependent glycerol-3-phosphate dehydrogenase family.

The protein localises to the cytoplasm. The enzyme catalyses sn-glycerol 3-phosphate + NAD(+) = dihydroxyacetone phosphate + NADH + H(+). The catalysed reaction is sn-glycerol 3-phosphate + NADP(+) = dihydroxyacetone phosphate + NADPH + H(+). The protein operates within membrane lipid metabolism; glycerophospholipid metabolism. Catalyzes the reduction of the glycolytic intermediate dihydroxyacetone phosphate (DHAP) to sn-glycerol 3-phosphate (G3P), the key precursor for phospholipid synthesis. This chain is Glycerol-3-phosphate dehydrogenase [NAD(P)+], found in Pseudomonas entomophila (strain L48).